The chain runs to 146 residues: uncharacterized protein (146 aa).

Residues 1-137 enclose the HTH marR-type domain; sequence MLSQEFFNSF…TINVMNQIHE (137 aa).

This is an uncharacterized protein from Staphylococcus aureus (strain N315).